The following is a 203-amino-acid chain: V-type ATP synthase subunit D (203 aa).

Belongs to the V-ATPase D subunit family.

In terms of biological role, produces ATP from ADP in the presence of a proton gradient across the membrane. This Streptococcus pneumoniae (strain Hungary19A-6) protein is V-type ATP synthase subunit D.